A 380-amino-acid chain; its full sequence is 2-aminoethylphosphonate--pyruvate transaminase (380 aa).

N6-(pyridoxal phosphate)lysine is present on Lys-204.

It belongs to the class-V pyridoxal-phosphate-dependent aminotransferase family. PhnW subfamily. Homodimer. Pyridoxal 5'-phosphate serves as cofactor.

It catalyses the reaction (2-aminoethyl)phosphonate + pyruvate = phosphonoacetaldehyde + L-alanine. In terms of biological role, involved in phosphonate degradation. This Aeromonas hydrophila subsp. hydrophila (strain ATCC 7966 / DSM 30187 / BCRC 13018 / CCUG 14551 / JCM 1027 / KCTC 2358 / NCIMB 9240 / NCTC 8049) protein is 2-aminoethylphosphonate--pyruvate transaminase.